The sequence spans 475 residues: Na(+)/H(+) antiporter NhaA 2 (475 aa).

The next 12 membrane-spanning stretches (helical) occupy residues 44 to 64 (AQAT…WWAN), 92 to 112 (LKHI…GLEI), 130 to 150 (LILC…LFNW), 156 to 176 (IGWG…LTLV), 186 to 206 (AFLV…IALF), 211 to 231 (ISVI…IANY), 232 to 252 (AGVL…WTML), 255 to 275 (GVHP…RPML), 331 to 351 (ALDL…NAGV), 368 to 388 (LGIV…ACWL), 406 to 426 (VIGM…IATL), and 442 to 462 (ILFA…IIAA).

The protein belongs to the NhaA Na(+)/H(+) (TC 2.A.33) antiporter family.

Its subcellular location is the cell inner membrane. The enzyme catalyses Na(+)(in) + 2 H(+)(out) = Na(+)(out) + 2 H(+)(in). In terms of biological role, na(+)/H(+) antiporter that extrudes sodium in exchange for external protons. In Psychromonas ingrahamii (strain DSM 17664 / CCUG 51855 / 37), this protein is Na(+)/H(+) antiporter NhaA 2.